The chain runs to 708 residues: tRNA(Met) cytidine acetyltransferase TmcA (708 aa).

ATP contacts are provided by residues Gln-189, 215-224 (GRGKTSALGL), and Arg-357. An N-acetyltransferase domain is found at 398–574 (PECVEQPERL…YSLLMVRGEH (177 aa)). Acetyl-CoA is bound by residues 502-504 (IAV) and 509-515 (QRQGIGS).

It belongs to the RNA cytidine acetyltransferase family. TmcA subfamily.

The protein localises to the cytoplasm. The enzyme catalyses cytidine(34) in elongator tRNA(Met) + acetyl-CoA + ATP + H2O = N(4)-acetylcytidine(34) in elongator tRNA(Met) + ADP + phosphate + CoA + H(+). In terms of biological role, catalyzes the formation of N(4)-acetylcytidine (ac(4)C) at the wobble position of tRNA(Met), by using acetyl-CoA as an acetyl donor and ATP (or GTP). This Vibrio cholerae serotype O1 (strain ATCC 39315 / El Tor Inaba N16961) protein is tRNA(Met) cytidine acetyltransferase TmcA.